The sequence spans 856 residues: Villin-like protein (856 aa).

Gelsolin-like repeat units follow at residues 22–74 (RKMV…EAQG), 146–186 (VSAT…SEKA), 263–307 (LVVL…QERK), 401–450 (LHRQ…DEIE), 521–561 (TRTM…DQRE), and 624–665 (LVLA…WKEA). Residues 762–796 (SQDSSENDLVRSPKSAGSRTSSSVSSTSATINGGL) form a disordered region. A compositionally biased stretch (low complexity) spans 776 to 791 (SAGSRTSSSVSSTSAT). Positions 790 to 856 (ATINGGLRRE…RQEKKQLGFF (67 aa)) constitute an HP domain.

This sequence belongs to the villin/gelsolin family. In terms of tissue distribution, ubiquitously expressed in 16 tissues examined.

Its function is as follows. Possible tumor suppressor. This chain is Villin-like protein (VILL), found in Homo sapiens (Human).